A 201-amino-acid polypeptide reads, in one-letter code: Guanylate kinase (201 aa).

The Guanylate kinase-like domain occupies 7 to 186 (GVLLVLSSPS…SVEEISSILN (180 aa)). Residue 14-21 (SPSGAGKT) participates in ATP binding.

This sequence belongs to the guanylate kinase family.

The protein resides in the cytoplasm. It carries out the reaction GMP + ATP = GDP + ADP. Functionally, essential for recycling GMP and indirectly, cGMP. In Wolbachia pipientis wMel, this protein is Guanylate kinase.